Reading from the N-terminus, the 2030-residue chain is Dedicator of cytokinesis protein 3 (2030 aa).

One can recognise an SH3 domain in the interval 6–67 (EEEKYGVVIC…PANYIHLKKA (62 aa)). The 179-residue stretch at 421 to 599 (RNDLYLTLEK…ESFFISTQLS (179 aa)) folds into the C2 DOCK-type domain. Positions 1228–1635 (KSEINKEEMY…LYHEFPGLDK (408 aa)) constitute a DOCKER domain. 4 disordered regions span residues 1641 to 1662 (SGTS…PESI), 1734 to 1771 (SSSQ…SLPD), 1849 to 1927 (DTPP…ADED), and 1951 to 2030 (QPCR…RGEQ). The residue at position 1658 (Ser1658) is a Phosphoserine. Residues 1734-1754 (SSSQASPSSSSLSSTHSAPSQ) are compositionally biased toward low complexity. The segment covering 1755 to 1765 (MITSAPSSARG) has biased composition (polar residues). Positions 1880-1902 (GSNSTLSGSASSGVSSLSESNFG) are enriched in low complexity. Residues 1967 to 1977 (PMDPPALPPKP) show a composition bias toward pro residues. The short motif at 1970 to 1976 (PPALPPK) is the SH3-binding element. Basic and acidic residues-rich tracts occupy residues 1984–2001 (ALEH…ERPR) and 2014–2030 (AKEE…RGEQ).

Belongs to the DOCK family. In terms of assembly, interacts with presenilin proteins PSEN1 and PSEN2. Interacts with CRK. As to expression, in normal brains, it is localized in the neuropil, and occasionally in the pyramidal cells, while in Alzheimer disease brains, it is associated with neurofibrillary tangles.

It localises to the cytoplasm. Functionally, potential guanine nucleotide exchange factor (GEF). GEF proteins activate some small GTPases by exchanging bound GDP for free GTP. Its interaction with presenilin proteins as well as its ability to stimulate Tau/MAPT phosphorylation suggest that it may be involved in Alzheimer disease. Ectopic expression in nerve cells decreases the secretion of amyloid-beta APBA1 protein and lowers the rate of cell-substratum adhesion, suggesting that it may affect the function of some small GTPase involved in the regulation of actin cytoskeleton or cell adhesion receptors. This Homo sapiens (Human) protein is Dedicator of cytokinesis protein 3 (DOCK3).